The primary structure comprises 338 residues: Uroporphyrinogen decarboxylase (338 aa).

Substrate contacts are provided by residues 21–25 (RQAGR), D71, Y146, S201, and H316.

Belongs to the uroporphyrinogen decarboxylase family. In terms of assembly, homodimer.

It localises to the cytoplasm. It carries out the reaction uroporphyrinogen III + 4 H(+) = coproporphyrinogen III + 4 CO2. It participates in porphyrin-containing compound metabolism; protoporphyrin-IX biosynthesis; coproporphyrinogen-III from 5-aminolevulinate: step 4/4. Catalyzes the decarboxylation of four acetate groups of uroporphyrinogen-III to yield coproporphyrinogen-III. The protein is Uroporphyrinogen decarboxylase of Rickettsia akari (strain Hartford).